The following is a 108-amino-acid chain: MSETINVKIITPLNIVFEEQAKMITLPGEEGEFGVLQGHAPMIVSLKAGLLKVYIDDMHKPKITYLIANGVTEVTGSYINIATETAINITDLSEAEIENKLTALQKSI.

This sequence belongs to the ATPase epsilon chain family. F-type ATPases have 2 components, CF(1) - the catalytic core - and CF(0) - the membrane proton channel. CF(1) has five subunits: alpha(3), beta(3), gamma(1), delta(1), epsilon(1). CF(0) has three main subunits: a, b and c.

It localises to the cell inner membrane. Functionally, produces ATP from ADP in the presence of a proton gradient across the membrane. This Rickettsia bellii (strain OSU 85-389) protein is ATP synthase epsilon chain.